A 368-amino-acid polypeptide reads, in one-letter code: Phosphoribosylaminoimidazole-succinocarboxamide synthase (368 aa).

This sequence belongs to the SAICAR synthetase family.

The enzyme catalyses 5-amino-1-(5-phospho-D-ribosyl)imidazole-4-carboxylate + L-aspartate + ATP = (2S)-2-[5-amino-1-(5-phospho-beta-D-ribosyl)imidazole-4-carboxamido]succinate + ADP + phosphate + 2 H(+). It participates in purine metabolism; IMP biosynthesis via de novo pathway; 5-amino-1-(5-phospho-D-ribosyl)imidazole-4-carboxamide from 5-amino-1-(5-phospho-D-ribosyl)imidazole-4-carboxylate: step 1/2. This chain is Phosphoribosylaminoimidazole-succinocarboxamide synthase, found in Vibrio cholerae serotype O1 (strain ATCC 39315 / El Tor Inaba N16961).